Here is a 1137-residue protein sequence, read N- to C-terminus: AP-4 complex subunit epsilon-1 (1137 aa).

Phosphoserine occurs at positions 700 and 857. The tract at residues 727-1137 is interaction with TEPSIN; it reads SGALPVPQES…YQCQKVMEGS (411 aa).

The protein belongs to the adaptor complexes large subunit family. As to quaternary structure, adaptor protein complex 4 (AP-4) is a heterotetramer composed of two large adaptins (epsilon-type subunit AP4E1 and beta-type subunit AP4B1), a medium adaptin (mu-type subunit AP4M1) and a small adaptin (sigma-type AP4S1). Interacts with TEPSIN. Interacts with GRIA2; probably indirect it mediates the somatodendritic localization of GRIA2 in neurons. In terms of tissue distribution, widely expressed.

The protein localises to the golgi apparatus. The protein resides in the trans-Golgi network membrane. Component of the adaptor protein complex 4 (AP-4). Adaptor protein complexes are vesicle coat components involved both in vesicle formation and cargo selection. They control the vesicular transport of proteins in different trafficking pathways. AP-4 forms a non clathrin-associated coat on vesicles departing the trans-Golgi network (TGN) and may be involved in the targeting of proteins from the trans-Golgi network (TGN) to the endosomal-lysosomal system. It is also involved in protein sorting to the basolateral membrane in epithelial cells and the proper asymmetric localization of somatodendritic proteins in neurons. AP-4 is involved in the recognition and binding of tyrosine-based sorting signals found in the cytoplasmic part of cargos, but may also recognize other types of sorting signal. The sequence is that of AP-4 complex subunit epsilon-1 from Homo sapiens (Human).